The chain runs to 37 residues: Large ribosomal subunit protein bL36c (37 aa).

It belongs to the bacterial ribosomal protein bL36 family.

The protein localises to the plastid. It localises to the chloroplast. The polypeptide is Large ribosomal subunit protein bL36c (Ostreococcus tauri).